The chain runs to 423 residues: Probable efflux pump mfs2 (423 aa).

The next 11 membrane-spanning stretches (helical) occupy residues 21–41, 49–69, 79–99, 111–131, 138–158, 220–240, 256–278, 295–315, 319–339, 360–380, and 392–411; these read TMALSVYLLATAFGPLIIGPV, SIFHITNIWFLVWNLVCGFAH, LLAGFGASAVYSLGYGVLGDV, LYLLIPLTGSAVGPIVSGFIV, WMFWSTAILQLTLDLSSLLFH, AILEGIDYGLLYFALSSFSAL, YIVICIGTVSGSQLCGPLMDYAY, IPLLLPGALITPIGFLLYGWA, HLIWVVVDVGAALLSLGMQIF, AATQVLRSLLAFAFPLFSNSL, and LLAFLSIGIALPATGILWRW.

The protein belongs to the major facilitator superfamily.

It is found in the membrane. In terms of biological role, probable efflux pump; part of the gene cluster 27 that mediates the biosynthesis of asparasone A, a sclerotium-specific anthraquinone pigment important for sclerotial survival. The sequence is that of Probable efflux pump mfs2 from Aspergillus flavus (strain ATCC 200026 / FGSC A1120 / IAM 13836 / NRRL 3357 / JCM 12722 / SRRC 167).